The chain runs to 524 residues: Putative UDP-glucuronosyltransferase ugt-56 (524 aa).

The signal sequence occupies residues 1–20 (MLWAFIVWLGALCIYGSAFD). N-linked (GlcNAc...) asparagine glycosylation is found at asparagine 125, asparagine 277, and asparagine 335. A helical membrane pass occupies residues 488–508 (LIDSSIALVFMLFIFVFVNHF).

It belongs to the UDP-glycosyltransferase family.

The protein resides in the membrane. The catalysed reaction is glucuronate acceptor + UDP-alpha-D-glucuronate = acceptor beta-D-glucuronoside + UDP + H(+). The sequence is that of Putative UDP-glucuronosyltransferase ugt-56 (ugt-56) from Caenorhabditis elegans.